Consider the following 101-residue polypeptide: Putative pterin-4-alpha-carbinolamine dehydratase (101 aa).

The protein belongs to the pterin-4-alpha-carbinolamine dehydratase family.

The enzyme catalyses (4aS,6R)-4a-hydroxy-L-erythro-5,6,7,8-tetrahydrobiopterin = (6R)-L-erythro-6,7-dihydrobiopterin + H2O. In Ralstonia pickettii (strain 12J), this protein is Putative pterin-4-alpha-carbinolamine dehydratase.